The following is a 628-amino-acid chain: Growth hormone receptor (628 aa).

The N-terminal stretch at 1-18 is a signal peptide; the sequence is MDLWQLLLTLAVVGSSNA. At 19 to 266 the chain is on the extracellular side; it reads FVGREAVTVT…FTCEEEFQFP (248 aa). Residues N33, N40, and N46 are each glycosylated (N-linked (GlcNAc...) asparagine). Cystine bridges form between C56–C66 and C101–C112. An N-linked (GlcNAc...) asparagine glycan is attached at N115. The cysteines at positions 126 and 140 are disulfide-linked. The 104-residue stretch at 151-254 folds into the Fibronectin type-III domain; sequence PPTGLNWTLM…EILYITLPQS (104 aa). N-linked (GlcNAc...) asparagine glycans are attached at residues N156, N161, and N200. Positions 240–244 match the WSXWS motif motif; sequence YGEFS. The helical transmembrane segment at 267–287 threads the bilayer; the sequence is WFLIMIFGIFGLTVMLLVVMF. Residues 288–628 are Cytoplasmic-facing; sequence SKQQRIKMLI…STDQLNKIML (341 aa). Residues 294–379 are required for JAK2 binding; that stretch reads KMLILPPVPV…HQKSLNILGA (86 aa). A Box 1 motif motif is present at residues 297-305; it reads ILPPVPVPK. The UbE motif motif lies at 340–349; the sequence is DSWVEFIELD. S341 is modified (phosphoserine). A phosphotyrosine mark is found at Y483 and Y585.

This sequence belongs to the type I cytokine receptor family. Type 1 subfamily. On growth hormone (GH) binding, forms homodimers and binds JAK2 via a box 1-containing domain. The soluble form (GHBP) is produced by phorbol ester-promoted proteolytic cleavage at the cell surface (shedding) by ADAM17/TACE. Shedding is inhibited by growth hormone (GH) binding to the receptor probably due to a conformational change in GHR rendering the receptor inaccessible to ADAM17. In terms of processing, on GH binding, phosphorylated on tyrosine residues in the cytoplasmic domain by JAK2. Post-translationally, ubiquitinated by the ECS(SOCS2) complex following ligand-binding and phosphorylation by JAK2, leading to its degradation by the proteasome. Regulation by the ECS(SOCS2) complex acts as a negative feedback loop of growth hormone receptor signaling. Ubiquitination is not sufficient for GHR internalization.

The protein localises to the cell membrane. The protein resides in the secreted. In terms of biological role, receptor for pituitary gland growth hormone (GH1) involved in regulating postnatal body growth. On ligand binding, couples to the JAK2/STAT5 pathway. Functionally, the soluble form (GHBP) acts as a reservoir of growth hormone in plasma and may be a modulator/inhibitor of GH signaling. This Cavia porcellus (Guinea pig) protein is Growth hormone receptor (GHR).